A 473-amino-acid chain; its full sequence is Argininosuccinate lyase (473 aa).

Residues S34, N121, and T166 each coordinate 2-(N(omega)-L-arginino)succinate. The active-site Proton acceptor is H167. The active-site Proton donor is S289. N297, Y329, and Q334 together coordinate 2-(N(omega)-L-arginino)succinate.

This sequence belongs to the lyase 1 family. Argininosuccinate lyase subfamily.

It catalyses the reaction 2-(N(omega)-L-arginino)succinate = fumarate + L-arginine. It functions in the pathway amino-acid biosynthesis; L-arginine biosynthesis; L-arginine from L-ornithine and carbamoyl phosphate: step 3/3. In Chlamydomonas reinhardtii (Chlamydomonas smithii), this protein is Argininosuccinate lyase (ARG7).